Consider the following 295-residue polypeptide: MTKQIQKTVSVCIIGRPNSGKSTLLNRIIGEKLSIVTPKVQTTRSIITGIITLNDTQIILYDTPGIFEPKGTLEKAMVRCAWSSLHSADIVMLIIDSLKPLDSITHDILNKLRSLNVVPVFLLNKIDVESKYIDDTKAFLAENYSDSLLFPISAISGENVDKLLEYITSKAKIAPWLYEEDDITDLPMRFIAAEITREQLFLGLQQELPYKLTVQTEKWEELKDKSVKINQIIVVSRESYKTIILGKNGSKIKELGAKSRMQMQQFFGFPVHLFLFVKVQELWEDNSDYYEYMKI.

The 170-residue stretch at 7–176 folds into the Era-type G domain; it reads KTVSVCIIGR…ITSKAKIAPW (170 aa). The G1 stretch occupies residues 15-22; sequence GRPNSGKS. Residue 15 to 22 participates in GTP binding; sequence GRPNSGKS. Residues 41 to 45 form a G2 region; sequence QTTRS. The segment at 62 to 65 is G3; the sequence is DTPG. Residues 62-66 and 124-127 each bind GTP; these read DTPGI and NKID. Residues 124 to 127 are G4; sequence NKID. The G5 stretch occupies residues 152–154; that stretch reads ISA. A KH type-2 domain is found at 204–281; that stretch reads LQQELPYKLT…HLFLFVKVQE (78 aa).

This sequence belongs to the TRAFAC class TrmE-Era-EngA-EngB-Septin-like GTPase superfamily. Era GTPase family. Monomer.

The protein localises to the cytoplasm. The protein resides in the cell inner membrane. In terms of biological role, an essential GTPase that binds both GDP and GTP, with rapid nucleotide exchange. Plays a role in 16S rRNA processing and 30S ribosomal subunit biogenesis and possibly also in cell cycle regulation and energy metabolism. This Rickettsia bellii (strain RML369-C) protein is GTPase Era.